Here is a 921-residue protein sequence, read N- to C-terminus: TRPM8 channel-associated factor 1 (921 aa).

The 300-residue stretch at 542-841 folds into the Peptidase M60 domain; sequence YCWMSTGLYI…TYLQLQEAFG (300 aa).

This sequence belongs to the TCAF family. As to quaternary structure, interacts with TRPM8 (via N-terminus and C-terminus domains); the interaction inhibits TRPM8 channel activity. Interacts with TRPV6.

Its subcellular location is the cell membrane. Its function is as follows. Positively regulates the plasma membrane cation channel TRPM8 activity. Involved in the recruitment of TRPM8 to the cell surface. Promotes prostate cancer cell migration inhibition in a TRPM8-dependent manner. The protein is TRPM8 channel-associated factor 1 of Pongo abelii (Sumatran orangutan).